The sequence spans 224 residues: MSVINFTGSSGPLVKVCGLQSTEAAECALDSDADLLGIICVPNRKRTIDPVIARKISSLVKAYKNSSGTPKYLVGVFRNQPKEDVLALVNDYGIDIVQLHGDESWQEYQEFLGLPVIKRLVFPKDCNILLSAASQKPHSFIPLFDSEAGGTGELLDWNSISDWVGRQESPESLHFMLAGGLTPENVGDALRLNGVIGVDVSGGVETNGVKDSNKIANFVKNAKK.

Belongs to the TrpF family.

It catalyses the reaction N-(5-phospho-beta-D-ribosyl)anthranilate = 1-(2-carboxyphenylamino)-1-deoxy-D-ribulose 5-phosphate. The protein operates within amino-acid biosynthesis; L-tryptophan biosynthesis; L-tryptophan from chorismate: step 3/5. The protein is N-(5'-phosphoribosyl)anthranilate isomerase (TRP1) of Saccharomyces cerevisiae (strain ATCC 204508 / S288c) (Baker's yeast).